The following is a 57-amino-acid chain: Delta-elapitoxin-Cb1a (57 aa).

4 disulfide bridges follow: Cys3–Cys22, Cys15–Cys36, Cys40–Cys49, and Cys50–Cys55.

This sequence belongs to the three-finger toxin family. Short-chain subfamily. In terms of tissue distribution, expressed by the venom gland.

Its subcellular location is the secreted. Its function is as follows. This toxin shifts the voltage-dependence of Nav1.4/SCN4A activation to more hyperpolarised potentials, inhibits inactivation, and produces large ramp currents, consistent with its profound effects on contractile force in an isolated skeletal muscle preparation. This toxin produces large muscle contractions and fasciculations in the indirectly stimulated chick biventer cervicis nerve-muscle assay, which are significantly inhibited by the addition of the sodium channel antagonist tetrodotoxin. This is Delta-elapitoxin-Cb1a from Calliophis bivirgatus (Blue Malaysian coral snake).